The chain runs to 385 residues: S-adenosylmethionine synthase (385 aa).

His-16 serves as a coordination point for ATP. Asp-18 is a Mg(2+) binding site. Glu-44 lines the K(+) pocket. 2 residues coordinate L-methionine: Glu-57 and Gln-100. Residues 100-110 (QSPDINQGVDR) form a flexible loop region. ATP contacts are provided by residues 164–166 (DGK), 230–231 (KF), Asp-239, 245–246 (RK), Ala-262, and Lys-266. Position 239 (Asp-239) interacts with L-methionine. Position 270 (Lys-270) interacts with L-methionine.

The protein belongs to the AdoMet synthase family. As to quaternary structure, homotetramer; dimer of dimers. Requires Mg(2+) as cofactor. K(+) is required as a cofactor.

It is found in the cytoplasm. The enzyme catalyses L-methionine + ATP + H2O = S-adenosyl-L-methionine + phosphate + diphosphate. It functions in the pathway amino-acid biosynthesis; S-adenosyl-L-methionine biosynthesis; S-adenosyl-L-methionine from L-methionine: step 1/1. Functionally, catalyzes the formation of S-adenosylmethionine (AdoMet) from methionine and ATP. The overall synthetic reaction is composed of two sequential steps, AdoMet formation and the subsequent tripolyphosphate hydrolysis which occurs prior to release of AdoMet from the enzyme. This is S-adenosylmethionine synthase from Helicobacter pylori (strain Shi470).